A 138-amino-acid chain; its full sequence is Cysteine desulfuration protein SufE (138 aa).

The Cysteine persulfide intermediate role is filled by Cys-51.

This sequence belongs to the SufE family. As to quaternary structure, homodimer. Interacts with SufS.

It is found in the cytoplasm. It functions in the pathway cofactor biosynthesis; iron-sulfur cluster biosynthesis. Its function is as follows. Participates in cysteine desulfuration mediated by SufS. Cysteine desulfuration mobilizes sulfur from L-cysteine to yield L-alanine and constitutes an essential step in sulfur metabolism for biosynthesis of a variety of sulfur-containing biomolecules. Functions as a sulfur acceptor for SufS, by mediating the direct transfer of the sulfur atom from the S-sulfanylcysteine of SufS, an intermediate product of cysteine desulfuration process. In Salmonella agona (strain SL483), this protein is Cysteine desulfuration protein SufE.